Consider the following 397-residue polypeptide: MKAVGLVTEYNPFHNGHIYHIQQAKAVTGADVVIAVMSGNFVQRGEPALFDKWTRTQAALANGVDLVIELPTFYAVQPSHLFAEGAIKLLTALGVEDVVFGSEHATVDFLNLAKQAPSVQGGKAFQEKNQTFAQAYATQLESETGFKLEDPNDILAFGYAKAILNLNSPIKLHAIQRVAAGYHDQSFTDDQTIASASSIRLALHKGKLEKVKGVVPNQTLVDISSANHTVDFESQFWPLLKYRLMTDTIGQLGQVYQMAEGLEHRLAAVALGEPGPQSYQSFIKAVKSKRYTFARIQRTLLYTLLNVKVDQMQAAMQDPYLRILGFTDKGQAYLNGAKKTTTLPLISKVDQHLAKANLRLDFKAGKLWQLLAREPGQQQDIARQPIHFTQAHTKEDK.

ATP contacts are provided by residues 7-20 (VTEY…HIYH), Gly101, Asn152, and Arg177.

Belongs to the TmcAL family.

It localises to the cytoplasm. It catalyses the reaction cytidine(34) in elongator tRNA(Met) + acetate + ATP = N(4)-acetylcytidine(34) in elongator tRNA(Met) + AMP + diphosphate. Functionally, catalyzes the formation of N(4)-acetylcytidine (ac(4)C) at the wobble position of elongator tRNA(Met), using acetate and ATP as substrates. First activates an acetate ion to form acetyladenylate (Ac-AMP) and then transfers the acetyl group to tRNA to form ac(4)C34. The sequence is that of tRNA(Met) cytidine acetate ligase from Leuconostoc citreum (strain KM20).